The sequence spans 129 residues: Methylmalonyl-CoA decarboxylase subunit gamma (129 aa).

Composition is skewed to low complexity over residues 24 to 39 (APAA…APAP) and 49 to 58 (PAAAAAPVPA). The tract at residues 24-58 (APAAAPKAAPAAAPAPKAAPAPAPAPAAAAAPVPA) is disordered. Positions 51–129 (AAAAPVPAGA…STGDDMVVLG (79 aa)) constitute a Biotinyl-binding domain. Lys-95 carries the post-translational modification N6-biotinyllysine.

In terms of assembly, the methylmalonyl-CoA decarboxylase is composed of five subunits: the carboxyltransferase alpha subunit (MmdA), the tunnel beta subunit (MmdB), the biotin-containing gamma subunit (MmdC), and the delta (MmdD) and epsilon (MmdE) subunits. It depends on biotin as a cofactor.

It is found in the cell membrane. The enzyme catalyses (S)-methylmalonyl-CoA + Na(+)(in) + H(+)(out) = propanoyl-CoA + Na(+)(out) + CO2. With respect to regulation, completely inhibited by avidin. In terms of biological role, biotin-containing subunit of the sodium ion pump methylmalonyl-CoA decarboxylase, which converts the chemical energy of a decarboxylation reaction into an electrochemical gradient of Na(+) ions across the cytoplasmic membrane, thereby creating a sodium ion motive force that is used for ATP synthesis. Can also convert malonyl-CoA into acetyl-CoA. In Veillonella parvula (Staphylococcus parvulus), this protein is Methylmalonyl-CoA decarboxylase subunit gamma.